Consider the following 898-residue polypeptide: Cilium assembly protein DZIP1 (898 aa).

A disordered region spans residues 14-66 (DPPGTHSSAGIPSLLSSPQSQPSSGSQSRPAPSTMSGPLTSSGASTSIPPPFK). A compositionally biased stretch (low complexity) spans 25–46 (PSLLSSPQSQPSSGSQSRPAPS). Residues 47 to 60 (TMSGPLTSSGASTS) are compositionally biased toward polar residues. The stretch at 145–197 (LSISLQAAEERLLAEAREREQICVQLQKKTQDAKALKEELKQRKKIIASQQAM) forms a coiled coil. The segment at 207-230 (HKCQHCEKAFMNASFLQSHMQRRH) adopts a C2H2-type zinc-finger fold. Coiled-coil stretches lie at residues 242–353 (NQKK…VQTQ) and 407–447 (SAVS…ISSK). Residues 435–463 (TSQNKQMKQISSKPPTITVQREGVSTPSP) are compositionally biased toward polar residues. Disordered stretches follow at residues 435–509 (TSQN…SWQK), 585–739 (EQRV…WTDG), and 773–878 (KSLE…DAGT). Low complexity predominate over residues 495–505 (SSISESPTENR). Positions 573-590 (YRRALKEISHKLEQRVKE) form a coiled coil. Residues 605-652 (VVQSRPRSSSFPSTVTRVMSGPASKQQRTPQPVPRSRTNVPHKTSTPL) show a composition bias toward polar residues. Residues 662–684 (SDEDSSEEEEEEEEEEESSDEES) show a composition bias toward acidic residues. Composition is skewed to polar residues over residues 685-715 (PQMQ…QSVR) and 723-734 (AEPTNVTTLSDS). Positions 797-815 (KPTDVRNTRQNAKKELKYS) are enriched in basic and acidic residues. The span at 816–826 (DDDDDDDDDWD) shows a compositional bias: acidic residues. Over residues 855-866 (DTSTSVWGSSTG) the composition is skewed to polar residues.

This sequence belongs to the DZIP C2H2-type zinc-finger protein family. As to expression, expressed throughout the embryo starting at 12 hours.

It is found in the cell projection. Its subcellular location is the cilium. The protein resides in the cytoplasm. The protein localises to the cytoskeleton. It localises to the cilium basal body. It is found in the microtubule organizing center. Its subcellular location is the centrosome. The protein resides in the centriole. The protein localises to the nucleus. Functionally, molecular adapter that recruits protein complexes required for cilium assembly and function to the cilium basal body. Required for establishment of left-right asymmetry during embryogenesis. Acts as a permissive factor that is required for the proper regulation of Hedgehog (Hh) target genes in response to Hh signals. Acts downstream of the Smoothened protein to modulate Gli activity in the somites of the developing embryo. This is Cilium assembly protein DZIP1 (dzip1) from Danio rerio (Zebrafish).